Reading from the N-terminus, the 344-residue chain is N-acetyl-gamma-glutamyl-phosphate reductase (344 aa).

Cys-150 is an active-site residue.

Belongs to the NAGSA dehydrogenase family. Type 1 subfamily.

It is found in the cytoplasm. The enzyme catalyses N-acetyl-L-glutamate 5-semialdehyde + phosphate + NADP(+) = N-acetyl-L-glutamyl 5-phosphate + NADPH + H(+). It participates in amino-acid biosynthesis; L-arginine biosynthesis; N(2)-acetyl-L-ornithine from L-glutamate: step 3/4. Functionally, catalyzes the NADPH-dependent reduction of N-acetyl-5-glutamyl phosphate to yield N-acetyl-L-glutamate 5-semialdehyde. In Pseudomonas aeruginosa (strain UCBPP-PA14), this protein is N-acetyl-gamma-glutamyl-phosphate reductase.